A 287-amino-acid polypeptide reads, in one-letter code: MQIFGKILGAFFGFLFGGVFGALFGLFIGHQFDKARRLSQAGFKTAGFGQGPSQAQRQEEFFKSAFAVMGHVAKAKGQVTKEEIQLASAMMDRMSLHGEQRRAAQDAFREGKERDFPLEQVLERVKIATSGRFDLLQFFLELQISAAFADGDVHPSERNVLHKIARGLGFSSEQLERRLQMQEAAFRFQRQGGFGGQQHQSHHSSSHGGWQQASQTDRLADAYKILGIDANADGKEVKRAYRKLMNEHHPDKLMAKGLPPEMMNMAKEKSQEIQSAYDLIKKEKGFK.

At 1–6 (MQIFGK) the chain is on the periplasmic side. Residues 7-30 (ILGAFFGFLFGGVFGALFGLFIGH) traverse the membrane as a helical segment. The Cytoplasmic portion of the chain corresponds to 31 to 287 (QFDKARRLSQ…DLIKKEKGFK (257 aa)). A disordered region spans residues 192–213 (GGFGGQQHQSHHSSSHGGWQQA). The region spanning 221-287 (DAYKILGIDA…DLIKKEKGFK (67 aa)) is the J domain.

In terms of assembly, homodimer.

Its subcellular location is the cell inner membrane. Its function is as follows. Regulatory DnaK co-chaperone. Direct interaction between DnaK and DjlA is needed for the induction of the wcaABCDE operon, involved in the synthesis of a colanic acid polysaccharide capsule, possibly through activation of the RcsB/RcsC phosphotransfer signaling pathway. The colanic acid capsule may help the bacterium survive conditions outside the host. The chain is Co-chaperone protein DjlA from Vibrio vulnificus (strain CMCP6).